Here is a 301-residue protein sequence, read N- to C-terminus: uncharacterized protein (301 aa).

The Radical SAM core domain maps to 45 to 286 (KELSDGWALN…EELGKMFTEL (242 aa)).

This is an uncharacterized protein from Acidianus two-tailed virus (ATV).